Consider the following 313-residue polypeptide: Ribosomal RNA small subunit methyltransferase H (313 aa).

S-adenosyl-L-methionine-binding positions include 35–37 (GGH), Asp-55, Phe-79, Asp-101, and Gln-108.

The protein belongs to the methyltransferase superfamily. RsmH family.

Its subcellular location is the cytoplasm. The catalysed reaction is cytidine(1402) in 16S rRNA + S-adenosyl-L-methionine = N(4)-methylcytidine(1402) in 16S rRNA + S-adenosyl-L-homocysteine + H(+). Specifically methylates the N4 position of cytidine in position 1402 (C1402) of 16S rRNA. The protein is Ribosomal RNA small subunit methyltransferase H of Shigella flexneri.